The chain runs to 211 residues: NADH-quinone oxidoreductase subunit I (211 aa).

A disordered region spans residues 21–41 (PTTEQYPEQKKETAPRFHGRH). 4Fe-4S ferredoxin-type domains are found at residues 43–73 (LNRH…VEGA) and 89–118 (RVYQ…MSND). [4Fe-4S] cluster contacts are provided by Cys53, Cys56, Cys59, Cys63, Cys98, Cys101, Cys104, and Cys108. The segment at 141 to 211 (RAGMESPPHP…AHGAGSERPR (71 aa)) is disordered. Residues 152–166 (RLGESETDYYTRDPD) are compositionally biased toward basic and acidic residues. Residues 179 to 191 (DEADEAGEAGEAG) show a composition bias toward acidic residues. Over residues 192–211 (EAERAADKVPAHGAGSERPR) the composition is skewed to basic and acidic residues.

The protein belongs to the complex I 23 kDa subunit family. In terms of assembly, NDH-1 is composed of 14 different subunits. Subunits NuoA, H, J, K, L, M, N constitute the membrane sector of the complex. [4Fe-4S] cluster is required as a cofactor.

The protein resides in the cell membrane. It catalyses the reaction a quinone + NADH + 5 H(+)(in) = a quinol + NAD(+) + 4 H(+)(out). Its function is as follows. NDH-1 shuttles electrons from NADH, via FMN and iron-sulfur (Fe-S) centers, to quinones in the respiratory chain. The immediate electron acceptor for the enzyme in this species is believed to be ubiquinone. Couples the redox reaction to proton translocation (for every two electrons transferred, four hydrogen ions are translocated across the cytoplasmic membrane), and thus conserves the redox energy in a proton gradient. This Parafrankia sp. (strain EAN1pec) protein is NADH-quinone oxidoreductase subunit I.